Here is an 849-residue protein sequence, read N- to C-terminus: MRFFRKTSLYLSLFLYFFLYESSMAANTIRRGESLRDGINHKPLVSPQKTFELGFFSPGSSTHRFLGIWYGNIEDKAVVWVANRATPISDQSGVLMISNDGNLVLLDGKNITVWSSNIESSTTNNNNRVVSIHDTGNFVLSETDTDRPIWESFNHPTDTFLPQMRVRVNPQTGDNHAFVSWRSETDPSPGNYSLGVDPSGAPEIVLWEGNKTRKWRSGQWNSAIFTGIPNMSLLTNYLYGFKLSSPPDETGSVYFTYVPSDPSVLLRFKVLYNGTEEELRWNETLKKWTKFQSEPDSECDQYNRCGKFGICDMKGSNGICSCIHGYEQVSVGNWSRGCRRRTPLKCERNISVGEDEFLTLKSVKLPDFEIPEHNLVDPEDCRERCLRNCSCNAYSLVGGIGCMIWNQDLVDLQQFEAGGSSLHIRLADSEVGENRKTKIAVIVAVLVGVILIGIFALLLWRFKRKKDVSGAYCGKNTDTSVVVADLTKSKETTSAFSGSVDIMIEGKAVNTSELPVFSLNAIAIATNDFCKENELGRGGFGPVYKGVLEDGREIAVKRLSGKSGQGVDEFKNEIILIAKLQHRNLVRLLGCCFEGEEKMLVYEYMPNKSLDFFLFDETKQALIDWKLRFSIIEGIARGLLYLHRDSRLRIIHRDLKVSNVLLDAEMNPKISDFGMARIFGGNQNEANTVRVVGTYGYMSPEYAMEGLFSVKSDVYSFGVLLLEIVSGKRNTSLRSSEHGSLIGYAWYLYTHGRSEELVDPKIRVTCSKREALRCIHVAMLCVQDSAAERPNMASVLLMLESDTATLAAPRQPTFTSTRRNSIDVNFALDSSQQYIVSSNEITSTVVLGR.

A signal peptide spans methionine 1–alanine 25. The Bulb-type lectin domain occupies alanine 26–phenylalanine 153. The Extracellular portion of the chain corresponds to alanine 26 to lysine 438. Asparagine 110, asparagine 191, asparagine 210, asparagine 230, asparagine 273, and asparagine 282 each carry an N-linked (GlcNAc...) asparagine glycan. Positions proline 295–glycine 332 constitute an EGF-like; atypical domain. 2 disulfide bridges follow: cysteine 299-cysteine 311 and cysteine 305-cysteine 320. 3 N-linked (GlcNAc...) asparagine glycosylation sites follow: asparagine 333, asparagine 349, and asparagine 388. A PAN domain is found at cysteine 346 to alanine 427. Cystine bridges form between cysteine 381–cysteine 402 and cysteine 385–cysteine 391. A helical membrane pass occupies residues isoleucine 439–leucine 459. Topologically, residues tryptophan 460–arginine 849 are cytoplasmic. The Protein kinase domain maps to phenylalanine 529–phenylalanine 814. ATP contacts are provided by residues leucine 535–valine 543 and lysine 557. Serine 563 bears the Phosphoserine mark. Positions threonine 618 to isoleucine 635 are caM-binding. Aspartate 654 acts as the Proton acceptor in catalysis. 2 positions are modified to phosphoserine: serine 658 and serine 671. Threonine 688 is subject to Phosphothreonine. Phosphoserine occurs at positions 732 and 837. Phosphothreonine is present on threonine 844.

The protein belongs to the protein kinase superfamily. Ser/Thr protein kinase family.

The protein localises to the cell membrane. The catalysed reaction is L-seryl-[protein] + ATP = O-phospho-L-seryl-[protein] + ADP + H(+). It carries out the reaction L-threonyl-[protein] + ATP = O-phospho-L-threonyl-[protein] + ADP + H(+). This chain is G-type lectin S-receptor-like serine/threonine-protein kinase B120 (B120), found in Arabidopsis thaliana (Mouse-ear cress).